A 108-amino-acid polypeptide reads, in one-letter code: Cyclin-dependent protein kinase inhibitor SMR13 (108 aa).

Probable cyclin-dependent protein kinase (CDK) inhibitor that functions as a repressor of mitosis in the endoreduplication cell cycle. The protein is Cyclin-dependent protein kinase inhibitor SMR13 of Arabidopsis thaliana (Mouse-ear cress).